Consider the following 589-residue polypeptide: RNA-directed RNA polymerase subunit beta (589 aa).

Residues 259 to 391 (RRAHEGSVTN…TNTKKTFSEG (133 aa)) form the RdRp catalytic domain. Mg(2+) is bound by residues Asp274, Asp359, and Asp360.

As to quaternary structure, homodimer; the replicase complex can dimerize. Part of the viral RNA-dependent RNA polymerase complex, the other subunits are the host ribosomal protein S1, EF-Tu and EF-Ts. S1 is needed for the initiation of genomic RNA (+)-strand replication. It depends on Mg(2+) as a cofactor.

The enzyme catalyses RNA(n) + a ribonucleoside 5'-triphosphate = RNA(n+1) + diphosphate. In terms of biological role, this is the catalytic subunit of the viral RNA-dependent RNA polymerase complex. This complex is involved in viral RNA replication that produces (+)-stranded genomes via a complementary, (-)-stranded intermediate. Binds RNA cooperatively with the host ribosomal protein S1. This is RNA-directed RNA polymerase subunit beta from Escherichia coli (Bacteriophage Q-beta).